The primary structure comprises 143 residues: Small ribosomal subunit protein uS12 (143 aa).

Positions 1-19 (MGKPRGIRTARKHVNHRRE) are enriched in basic residues. The interval 1–21 (MGKPRGIRTARKHVNHRREQR) is disordered. A Hydroxyproline modification is found at Pro-62.

It belongs to the universal ribosomal protein uS12 family. Component of the 40S small ribosomal subunit.

Its subcellular location is the cytoplasm. The protein localises to the cytosol. The protein resides in the rough endoplasmic reticulum. The polypeptide is Small ribosomal subunit protein uS12 (RpS23) (Papilio dardanus (African swallowtail butterfly)).